A 249-amino-acid polypeptide reads, in one-letter code: Tetrahydromethanopterin S-methyltransferase subunit A (249 aa).

Over 1-227 (MADKKEVIQN…KISSGYYAGK (227 aa)) the chain is Cytoplasmic. 5-hydroxybenzimidazolylcob(I)amide is bound at residue H84. The helical transmembrane segment at 228-248 (IEGIVIGFILTLVFLIIIIQG) threads the bilayer. L249 is a topological domain (extracellular).

It belongs to the MtrA family. As to quaternary structure, the complex is composed of 8 subunits; MtrA, MtrB, MtrC, MtrD, MtrE, MtrF, MtrG and MtrH. The cofactor is 5-hydroxybenzimidazolylcob(I)amide.

Its subcellular location is the cell membrane. It catalyses the reaction 5-methyl-5,6,7,8-tetrahydromethanopterin + coenzyme M + 2 Na(+)(in) = 5,6,7,8-tetrahydromethanopterin + methyl-coenzyme M + 2 Na(+)(out). Its pathway is one-carbon metabolism; methanogenesis from CO(2); methyl-coenzyme M from 5,10-methylene-5,6,7,8-tetrahydromethanopterin: step 2/2. Functionally, part of a complex that catalyzes the formation of methyl-coenzyme M and tetrahydromethanopterin from coenzyme M and methyl-tetrahydromethanopterin. This is an energy-conserving, sodium-ion translocating step. This Methanosphaera stadtmanae (strain ATCC 43021 / DSM 3091 / JCM 11832 / MCB-3) protein is Tetrahydromethanopterin S-methyltransferase subunit A.